Consider the following 211-residue polypeptide: Ribosomal RNA small subunit methyltransferase G (211 aa).

S-adenosyl-L-methionine-binding positions include Gly81, Leu86, 132–133 (VE), and Arg147.

It belongs to the methyltransferase superfamily. RNA methyltransferase RsmG family.

It localises to the cytoplasm. The enzyme catalyses guanosine(527) in 16S rRNA + S-adenosyl-L-methionine = N(7)-methylguanosine(527) in 16S rRNA + S-adenosyl-L-homocysteine. Specifically methylates the N7 position of guanine in position 527 of 16S rRNA. This chain is Ribosomal RNA small subunit methyltransferase G, found in Actinobacillus succinogenes (strain ATCC 55618 / DSM 22257 / CCUG 43843 / 130Z).